The following is a 560-amino-acid chain: Oxygen-dependent choline dehydrogenase (560 aa).

6-35 (DYIIIGGGSAGSVLGSRISEDVSNNVLVLE) is an FAD binding site. The active-site Proton acceptor is the His472.

Belongs to the GMC oxidoreductase family. FAD is required as a cofactor.

It catalyses the reaction choline + A = betaine aldehyde + AH2. The enzyme catalyses betaine aldehyde + NAD(+) + H2O = glycine betaine + NADH + 2 H(+). The protein operates within amine and polyamine biosynthesis; betaine biosynthesis via choline pathway; betaine aldehyde from choline (cytochrome c reductase route): step 1/1. In terms of biological role, involved in the biosynthesis of the osmoprotectant glycine betaine. Catalyzes the oxidation of choline to betaine aldehyde and betaine aldehyde to glycine betaine at the same rate. This Staphylococcus saprophyticus subsp. saprophyticus (strain ATCC 15305 / DSM 20229 / NCIMB 8711 / NCTC 7292 / S-41) protein is Oxygen-dependent choline dehydrogenase.